Consider the following 100-residue polypeptide: UPF0473 protein lwe1514 (100 aa).

Belongs to the UPF0473 family.

The protein is UPF0473 protein lwe1514 of Listeria welshimeri serovar 6b (strain ATCC 35897 / DSM 20650 / CCUG 15529 / CIP 8149 / NCTC 11857 / SLCC 5334 / V8).